A 203-amino-acid polypeptide reads, in one-letter code: A-type ATP synthase subunit E (203 aa).

Belongs to the V-ATPase E subunit family. In terms of assembly, has multiple subunits with at least A(3), B(3), C, D, E, F, H, I and proteolipid K(x).

It localises to the cell membrane. Component of the A-type ATP synthase that produces ATP from ADP in the presence of a proton gradient across the membrane. The sequence is that of A-type ATP synthase subunit E from Thermococcus onnurineus (strain NA1).